The chain runs to 72 residues: DNA-directed RNA polymerase subunit Rpo10 (72 aa).

Zn(2+)-binding residues include Cys7, Cys10, Cys45, and Cys46.

Belongs to the archaeal Rpo10/eukaryotic RPB10 RNA polymerase subunit family. In terms of assembly, part of the RNA polymerase complex. The cofactor is Zn(2+).

The protein localises to the cytoplasm. It catalyses the reaction RNA(n) + a ribonucleoside 5'-triphosphate = RNA(n+1) + diphosphate. Functionally, DNA-dependent RNA polymerase (RNAP) catalyzes the transcription of DNA into RNA using the four ribonucleoside triphosphates as substrates. This chain is DNA-directed RNA polymerase subunit Rpo10, found in Methanopyrus kandleri (strain AV19 / DSM 6324 / JCM 9639 / NBRC 100938).